Here is a 344-residue protein sequence, read N- to C-terminus: C5a anaphylatoxin chemotactic receptor 2 (344 aa).

Topologically, residues 1-44 (MMNHTTSEYYDYEYDHEHYSDLPDVPVDCPAGTCFTSDVYLIVL) are extracellular. N3 carries an N-linked (GlcNAc...) asparagine glycan. A helical transmembrane segment spans residues 45-67 (LVLYAAVFLVGVPGNTLVAWVTW). Over 68–78 (KESRHRLGASW) the chain is Cytoplasmic. Residues 79-101 (FLHLTMADLLCCVSLPFLAVPIA) traverse the membrane as a helical segment. Topologically, residues 102 to 120 (QKGHWPYGAAGCWLLSSIT) are extracellular. Cysteines 113 and 192 form a disulfide. A helical transmembrane segment spans residues 121 to 143 (ILSMYASVLLLTGLSGDLFLLAF). Residues 144–155 (RPSWKGADHRTF) lie on the Cytoplasmic side of the membrane. The helical transmembrane segment at 156-178 (GVRVVQASSWMLGLLLTVPSAVY) threads the bilayer. The Extracellular segment spans residues 179–208 (RRLLQEHYPPRLVCGIDYGGSVSAEVAITT). The helical transmembrane segment at 209 to 231 (VRFLFGFLGPLVFMAGCHGILQR) threads the bilayer. Residues 232 to 243 (QMARRHWPLGTA) lie on the Cytoplasmic side of the membrane. The chain crosses the membrane as a helical span at residues 244 to 266 (VVVGFFICWTPYHVLRVIIAAAP). The Extracellular segment spans residues 267 to 280 (PHSLLLARVLEAEP). Residues 281-300 (LFNGLALAHSALNPIMFLYF) form a helical membrane-spanning segment. At 301-344 (GRKQLCKSLQAACHWALRDPQDEESAVTKVSISTSHEMVSEMPV) the chain is on the cytoplasmic side. S325 carries the phosphoserine modification.

It belongs to the G-protein coupled receptor 1 family. In terms of assembly, interacts with C3 (the anaphylatoxin peptide C3a and the adipogenic hormone ASP); the interaction occurs with higher affinity for ASP, enhancing the phosphorylation and activation of GPR77, recruitment of ARRB2 to the cell surface and endocytosis of GRP77. As to expression, highly expressed in liver and spleen. Lower levels in intestine, brain and kidney. Also expressed in adipose tissues with highest levels in gonadal and ingual fat depots. Lower levels in brown tissue.

Its subcellular location is the cell membrane. In terms of biological role, receptor for the chemotactic and inflammatory C3a, C4a and C5a anaphylatoxin peptides and also for their dearginated forms ASP/C3adesArg, C4adesArg and C5adesArg respectively. Couples weakly to G(i)-mediated signaling pathways. In Mus musculus (Mouse), this protein is C5a anaphylatoxin chemotactic receptor 2 (C5ar2).